We begin with the raw amino-acid sequence, 287 residues long: Nucleoid occlusion protein (287 aa).

Positions 146–165 (EALAQRVGKSQSAIANKMRL) form a DNA-binding region, H-T-H motif.

Belongs to the ParB family.

It localises to the cytoplasm. It is found in the nucleoid. In terms of biological role, effects nucleoid occlusion by binding relatively nonspecifically to DNA and preventing the assembly of the division machinery in the vicinity of the nucleoid, especially under conditions that disturb the cell cycle. It helps to coordinate cell division and chromosome segregation by preventing the formation of the Z ring through the nucleoid, which would cause chromosome breakage. The sequence is that of Nucleoid occlusion protein from Listeria monocytogenes serotype 4a (strain HCC23).